A 734-amino-acid chain; its full sequence is Photosystem I P700 chlorophyll a apoprotein A2 (734 aa).

The next 8 membrane-spanning stretches (helical) occupy residues 46 to 69 (IFAS…FHVA), 135 to 158 (LYNG…LHLQ), 175 to 199 (LNHH…HVAI), 273 to 291 (IAHH…GHMY), 330 to 353 (IHFQ…QHMY), 369 to 395 (AALY…IFFI), 417 to 439 (AIIS…LYVH), and 517 to 535 (FLVH…LILV). C559 and C568 together coordinate [4Fe-4S] cluster. A run of 2 helical transmembrane segments spans residues 575–596 (AFYL…YWHW) and 643–665 (LSVW…MFLI). Residues H654, M662, and Y670 each coordinate chlorophyll a. Position 671 (W671) interacts with phylloquinone. A helical transmembrane segment spans residues 707-727 (LVGLAHFSVGYIFTYAAFLIA).

Belongs to the PsaA/PsaB family. The PsaA/B heterodimer binds the P700 chlorophyll special pair and subsequent electron acceptors. PSI consists of a core antenna complex that captures photons, and an electron transfer chain that converts photonic excitation into a charge separation. The eukaryotic PSI reaction center is composed of at least 11 subunits. The cofactor is P700 is a chlorophyll a/chlorophyll a' dimer, A0 is one or more chlorophyll a, A1 is one or both phylloquinones and FX is a shared 4Fe-4S iron-sulfur center..

Its subcellular location is the plastid. It is found in the chloroplast thylakoid membrane. It carries out the reaction reduced [plastocyanin] + hnu + oxidized [2Fe-2S]-[ferredoxin] = oxidized [plastocyanin] + reduced [2Fe-2S]-[ferredoxin]. In terms of biological role, psaA and PsaB bind P700, the primary electron donor of photosystem I (PSI), as well as the electron acceptors A0, A1 and FX. PSI is a plastocyanin-ferredoxin oxidoreductase, converting photonic excitation into a charge separation, which transfers an electron from the donor P700 chlorophyll pair to the spectroscopically characterized acceptors A0, A1, FX, FA and FB in turn. Oxidized P700 is reduced on the lumenal side of the thylakoid membrane by plastocyanin. This chain is Photosystem I P700 chlorophyll a apoprotein A2, found in Morus indica (Mulberry).